The sequence spans 416 residues: Keratin, type I cuticular Ha1 (416 aa).

A head region spans residues 1–56 (MPYNFCLPSLSCRTSCSSRPCVPPSCHSCTLPGACNIPANVSNCNWFCEGSFNGSE). In terms of domain architecture, IF rod spans 56 to 367 (EKETMQFLND…SLLESEDCNL (312 aa)). The coil 1A stretch occupies residues 57 to 91 (KETMQFLNDRLASYLEKVRQLERDNAELENLIRER). The segment at 92 to 102 (SQQQEPLLCPS) is linker 1. The coil 1B stretch occupies residues 103-203 (YQSYFKTIEE…HEQEVNTLRC (101 aa)). Positions 204–219 (QLGDRLNVEVDAAPTV) are linker 12. Residues 220 to 363 (DLNRVLNETR…NTYRSLLESE (144 aa)) are coil 2. The tail stretch occupies residues 364–416 (DCNLPSNPCATTNACSKPIGPCLSNPCTPCVPPAPCTPCAPRPRCGPCNSFVR).

It belongs to the intermediate filament family.

In Pan troglodytes (Chimpanzee), this protein is Keratin, type I cuticular Ha1 (KRT31).